Reading from the N-terminus, the 180-residue chain is Large ribosomal subunit protein uL5 (180 aa).

This sequence belongs to the universal ribosomal protein uL5 family. In terms of assembly, part of the 50S ribosomal subunit; part of the 5S rRNA/L5/L18/L25 subcomplex. Contacts the 5S rRNA and the P site tRNA. Forms a bridge to the 30S subunit in the 70S ribosome.

This is one of the proteins that bind and probably mediate the attachment of the 5S RNA into the large ribosomal subunit, where it forms part of the central protuberance. In the 70S ribosome it contacts protein S13 of the 30S subunit (bridge B1b), connecting the 2 subunits; this bridge is implicated in subunit movement. Contacts the P site tRNA; the 5S rRNA and some of its associated proteins might help stabilize positioning of ribosome-bound tRNAs. The chain is Large ribosomal subunit protein uL5 from Clostridium tetani (strain Massachusetts / E88).